Consider the following 201-residue polypeptide: Large ribosomal subunit protein uL4 (201 aa).

The segment at 45-67 is disordered; it reads AQKTRAEVTGSGKKPWRQKGTGR.

The protein belongs to the universal ribosomal protein uL4 family. As to quaternary structure, part of the 50S ribosomal subunit.

In terms of biological role, one of the primary rRNA binding proteins, this protein initially binds near the 5'-end of the 23S rRNA. It is important during the early stages of 50S assembly. It makes multiple contacts with different domains of the 23S rRNA in the assembled 50S subunit and ribosome. Its function is as follows. Forms part of the polypeptide exit tunnel. The sequence is that of Large ribosomal subunit protein uL4 from Yersinia enterocolitica serotype O:8 / biotype 1B (strain NCTC 13174 / 8081).